The chain runs to 287 residues: uncharacterized protein (287 aa).

The region spanning Ser115–Ser287 is the ATP-grasp domain.

This is an uncharacterized protein from Mycoplasma genitalium (strain ATCC 33530 / DSM 19775 / NCTC 10195 / G37) (Mycoplasmoides genitalium).